The following is a 101-amino-acid chain: NAD(P)H-quinone oxidoreductase subunit 4L, chloroplastic (101 aa).

A run of 3 helical transmembrane segments spans residues 2–22, 32–52, and 61–81; these read ILEH…YGLI, MCLE…SDFF, and IFSI…LAIV.

This sequence belongs to the complex I subunit 4L family. NDH is composed of at least 16 different subunits, 5 of which are encoded in the nucleus.

It is found in the plastid. The protein resides in the chloroplast thylakoid membrane. It carries out the reaction a plastoquinone + NADH + (n+1) H(+)(in) = a plastoquinol + NAD(+) + n H(+)(out). The catalysed reaction is a plastoquinone + NADPH + (n+1) H(+)(in) = a plastoquinol + NADP(+) + n H(+)(out). NDH shuttles electrons from NAD(P)H:plastoquinone, via FMN and iron-sulfur (Fe-S) centers, to quinones in the photosynthetic chain and possibly in a chloroplast respiratory chain. The immediate electron acceptor for the enzyme in this species is believed to be plastoquinone. Couples the redox reaction to proton translocation, and thus conserves the redox energy in a proton gradient. The sequence is that of NAD(P)H-quinone oxidoreductase subunit 4L, chloroplastic from Nicotiana sylvestris (Wood tobacco).